Reading from the N-terminus, the 193-residue chain is ATP synthase subunit b (193 aa).

A helical transmembrane segment spans residues 35–55 (IPMMLATFIAFVIVFLLLFFF).

Belongs to the ATPase B chain family. As to quaternary structure, F-type ATPases have 2 components, F(1) - the catalytic core - and F(0) - the membrane proton channel. F(1) has five subunits: alpha(3), beta(3), gamma(1), delta(1), epsilon(1). F(0) has three main subunits: a(1), b(2) and c(10-14). The alpha and beta chains form an alternating ring which encloses part of the gamma chain. F(1) is attached to F(0) by a central stalk formed by the gamma and epsilon chains, while a peripheral stalk is formed by the delta and b chains.

The protein localises to the cell membrane. Its function is as follows. F(1)F(0) ATP synthase produces ATP from ADP in the presence of a proton or sodium gradient. F-type ATPases consist of two structural domains, F(1) containing the extramembraneous catalytic core and F(0) containing the membrane proton channel, linked together by a central stalk and a peripheral stalk. During catalysis, ATP synthesis in the catalytic domain of F(1) is coupled via a rotary mechanism of the central stalk subunits to proton translocation. Functionally, component of the F(0) channel, it forms part of the peripheral stalk, linking F(1) to F(0). This Mycoplasmopsis synoviae (strain 53) (Mycoplasma synoviae) protein is ATP synthase subunit b.